The chain runs to 740 residues: Leucine-rich repeat neuronal protein 4 (740 aa).

The first 18 residues, 1–18, serve as a signal peptide directing secretion; sequence MRQTLPLLLLTVLRPSWA. The Extracellular segment spans residues 19-679; sequence DPPQEKVPLF…PCAAFTTKPS (661 aa). Asn-42 carries N-linked (GlcNAc...) asparagine glycosylation. LRR repeat units lie at residues 51–74, 75–97, 98–123, 125–144, 145–168, 174–197, 203–226, 228–251, 253–276, and 277–300; these read LPAADATALTLANRNLERLPGCLP, RTLRSLDASHNLLRALSTSELGH, LEQLQVLTLRHNRIAALRWGPGGPAG, HTLDLSYNQLAALPPCTGPA, LSSLRALALAGNPLRALQPRAFAC, LLNLSCTALGRGAQGGIAEAAFAG, LVTLEVLDLSGTFLERVESGWIRD, PKLTSLYLRKMPRLTTLEGDIFKM, PNLQQLDCQDSPALASVATHIFQD, and TPHLQVLLFQNCNLSSFPPWTLDS. An N-linked (GlcNAc...) asparagine glycan is attached at Asn-176. Asn-289, Asn-379, and Asn-442 each carry an N-linked (GlcNAc...) asparagine glycan. Positions 389 to 517 are disordered; sequence VAPSAAPATR…QAPNPSLSEG (129 aa). Composition is skewed to polar residues over residues 430-454 and 490-514; these read APSTTNSVAGHSNSSVFPRAASTTR and WDRSISSPQPGQRTHATPQAPNPSL. The region spanning 579 to 679 is the Fibronectin type-III domain; that stretch reads IPDPPRLQGV…PCAAFTTKPS (101 aa). N-linked (GlcNAc...) asparagine glycosylation is present at Asn-622. A helical membrane pass occupies residues 680-700; sequence FALLLSGLCAASGLLLASTVV. Residues 701 to 740 lie on the Cytoplasmic side of the membrane; that stretch reads LSACLCRRGQTLGLQRCDTHLVAYKNPAFDDYPLGLQTVS.

It localises to the membrane. May play an important role in hippocampus-dependent long-lasting memory. The sequence is that of Leucine-rich repeat neuronal protein 4 (LRRN4) from Homo sapiens (Human).